The sequence spans 198 residues: Probable GTP-binding protein EngB (198 aa).

The EngB-type G domain occupies 22 to 195; the sequence is GHPEIAFLGR…WSWLEQTAGL (174 aa). GTP is bound by residues 30–37, 57–61, 75–78, 142–145, and 174–176; these read GRSNVGKS, GKTQT, DVPG, TKID, and FSA. S37 and T59 together coordinate Mg(2+).

This sequence belongs to the TRAFAC class TrmE-Era-EngA-EngB-Septin-like GTPase superfamily. EngB GTPase family. It depends on Mg(2+) as a cofactor.

Its function is as follows. Necessary for normal cell division and for the maintenance of normal septation. The chain is Probable GTP-binding protein EngB from Lacticaseibacillus paracasei (strain ATCC 334 / BCRC 17002 / CCUG 31169 / CIP 107868 / KCTC 3260 / NRRL B-441) (Lactobacillus paracasei).